We begin with the raw amino-acid sequence, 221 residues long: uncharacterized protein (221 aa).

The N-terminal stretch at 1–18 (MKRFLLLIILFGISFSFV) is a signal peptide.

This is an uncharacterized protein from Aquifex aeolicus (strain VF5).